A 320-amino-acid polypeptide reads, in one-letter code: UPF0053 protein in cps region (320 aa).

The helical transmembrane segment at 4–24 (CLSFLLMIGFSLIAEGFSFII) threads the bilayer. CBS domains lie at 121-183 (MTSR…PLDL) and 186-244 (LVRQ…PNEV).

Belongs to the UPF0053 family.

The protein localises to the cell membrane. This Klebsiella pneumoniae protein is UPF0053 protein in cps region.